A 121-amino-acid polypeptide reads, in one-letter code: Putative iron-sulfur cluster insertion protein ErpA (121 aa).

The iron-sulfur cluster site is built by Cys49, Cys113, and Cys115.

This sequence belongs to the HesB/IscA family. As to quaternary structure, homodimer. Iron-sulfur cluster serves as cofactor.

Functionally, required for insertion of 4Fe-4S clusters. This chain is Putative iron-sulfur cluster insertion protein ErpA, found in Nitrosomonas europaea (strain ATCC 19718 / CIP 103999 / KCTC 2705 / NBRC 14298).